The chain runs to 103 residues: Large ribosomal subunit protein bL21 (103 aa).

It belongs to the bacterial ribosomal protein bL21 family. Part of the 50S ribosomal subunit. Contacts protein L20.

Its function is as follows. This protein binds to 23S rRNA in the presence of protein L20. In Legionella pneumophila (strain Paris), this protein is Large ribosomal subunit protein bL21.